Reading from the N-terminus, the 130-residue chain is Small ribosomal subunit protein uS9 (130 aa).

A disordered region spans residues 109–130; it reads RMKERKKYGLKAARRAPQFSKR. The segment covering 111–130 has biased composition (basic residues); that stretch reads KERKKYGLKAARRAPQFSKR.

This sequence belongs to the universal ribosomal protein uS9 family.

This Lachnoclostridium phytofermentans (strain ATCC 700394 / DSM 18823 / ISDg) (Clostridium phytofermentans) protein is Small ribosomal subunit protein uS9.